The primary structure comprises 89 residues: Small ribosomal subunit protein uS15 (89 aa).

This sequence belongs to the universal ribosomal protein uS15 family. In terms of assembly, part of the 30S ribosomal subunit. Forms a bridge to the 50S subunit in the 70S ribosome, contacting the 23S rRNA.

Its function is as follows. One of the primary rRNA binding proteins, it binds directly to 16S rRNA where it helps nucleate assembly of the platform of the 30S subunit by binding and bridging several RNA helices of the 16S rRNA. In terms of biological role, forms an intersubunit bridge (bridge B4) with the 23S rRNA of the 50S subunit in the ribosome. This is Small ribosomal subunit protein uS15 from Lactococcus lactis subsp. lactis (strain IL1403) (Streptococcus lactis).